Reading from the N-terminus, the 177-residue chain is ATP synthase subunit delta (177 aa).

The protein belongs to the ATPase delta chain family. As to quaternary structure, F-type ATPases have 2 components, F(1) - the catalytic core - and F(0) - the membrane proton channel. F(1) has five subunits: alpha(3), beta(3), gamma(1), delta(1), epsilon(1). F(0) has three main subunits: a(1), b(2) and c(10-14). The alpha and beta chains form an alternating ring which encloses part of the gamma chain. F(1) is attached to F(0) by a central stalk formed by the gamma and epsilon chains, while a peripheral stalk is formed by the delta and b chains.

The protein localises to the cell inner membrane. Functionally, f(1)F(0) ATP synthase produces ATP from ADP in the presence of a proton or sodium gradient. F-type ATPases consist of two structural domains, F(1) containing the extramembraneous catalytic core and F(0) containing the membrane proton channel, linked together by a central stalk and a peripheral stalk. During catalysis, ATP synthesis in the catalytic domain of F(1) is coupled via a rotary mechanism of the central stalk subunits to proton translocation. This protein is part of the stalk that links CF(0) to CF(1). It either transmits conformational changes from CF(0) to CF(1) or is implicated in proton conduction. This Shewanella baltica (strain OS223) protein is ATP synthase subunit delta.